Reading from the N-terminus, the 175-residue chain is NADH-ubiquinone oxidoreductase chain 6 (175 aa).

A run of 5 helical transmembrane segments spans residues 1-21 (MMTY…VGFS), 27-47 (VYGG…IMNF), 49-69 (GSFL…VVFG), 88-108 (VVFG…LYVL), and 149-169 (YGMW…VVVM).

Belongs to the complex I subunit 6 family. As to quaternary structure, core subunit of respiratory chain NADH dehydrogenase (Complex I) which is composed of 45 different subunits.

The protein resides in the mitochondrion inner membrane. It catalyses the reaction a ubiquinone + NADH + 5 H(+)(in) = a ubiquinol + NAD(+) + 4 H(+)(out). Core subunit of the mitochondrial membrane respiratory chain NADH dehydrogenase (Complex I) which catalyzes electron transfer from NADH through the respiratory chain, using ubiquinone as an electron acceptor. Essential for the catalytic activity and assembly of complex I. The polypeptide is NADH-ubiquinone oxidoreductase chain 6 (MT-ND6) (Pteropus scapulatus (Little red flying fox)).